A 1483-amino-acid chain; its full sequence is Dynein axonemal assembly factor 1 homolog (1483 aa).

6 LRR repeats span residues 34–56, 57–78, 79–100, 101–122, 125–146, and 150–171; these read RLND…EEYT, ELKC…EKLS, KLKC…DPCR, ELDT…GTNV, VLNT…SDLI, and TLSV…KIFE. The LRRCT domain occupies 185 to 223; that stretch reads PVVSRLPQYRKTLILACKELTYLDSRPVFPRDRACAEAW. Disordered stretches follow at residues 249–282, 300–327, 945–986, and 1167–1213; these read SINC…TCAE, EEVS…GTSS, DSGD…HGTK, and SENE…SIDD. A compositionally biased stretch (polar residues) spans 311–327; the sequence is DGTNSSSSLEDNDGTSS. Residues 1183-1196 are compositionally biased toward basic and acidic residues; the sequence is TNDKESSDIMEKNG.

This sequence belongs to the DNAAF1 family.

The protein localises to the cell projection. Its subcellular location is the cilium. In terms of biological role, cilium-specific protein required for cilia structures. This chain is Dynein axonemal assembly factor 1 homolog (dtr), found in Drosophila melanogaster (Fruit fly).